The sequence spans 340 residues: Aldose 1-epimerase (340 aa).

Arg77 lines the substrate pocket. His172 functions as the Proton donor in the catalytic mechanism. Asp243 is a binding site for substrate. The active-site Proton acceptor is the Glu305.

This sequence belongs to the aldose epimerase family.

It is found in the cytoplasm. The enzyme catalyses alpha-D-glucose = beta-D-glucose. Its pathway is carbohydrate metabolism; hexose metabolism. Mutarotase converts alpha-aldose to the beta-anomer. It is active on D-glucose, L-arabinose, D-xylose, D-galactose, maltose and lactose. This is Aldose 1-epimerase (galM) from Haemophilus influenzae (strain ATCC 51907 / DSM 11121 / KW20 / Rd).